The chain runs to 308 residues: Elongation factor Ts (308 aa).

The interval 80 to 83 (TDFV) is involved in Mg(2+) ion dislocation from EF-Tu.

It belongs to the EF-Ts family.

It localises to the cytoplasm. Associates with the EF-Tu.GDP complex and induces the exchange of GDP to GTP. It remains bound to the aminoacyl-tRNA.EF-Tu.GTP complex up to the GTP hydrolysis stage on the ribosome. This is Elongation factor Ts from Rhodopseudomonas palustris (strain ATCC BAA-98 / CGA009).